Reading from the N-terminus, the 402-residue chain is S-adenosylmethionine synthase (402 aa).

An ATP-binding site is contributed by histidine 17. Aspartate 19 lines the Mg(2+) pocket. Residue glutamate 45 participates in K(+) binding. 2 residues coordinate L-methionine: glutamate 58 and glutamine 101. Residues 101-111 (QSSDIADGVNE) form a flexible loop region. ATP-binding positions include 177–179 (DAK), 244–245 (RF), aspartate 253, 259–260 (RK), alanine 276, and lysine 280. Aspartate 253 is a binding site for L-methionine. Lysine 284 contributes to the L-methionine binding site.

Belongs to the AdoMet synthase family. As to quaternary structure, homotetramer; dimer of dimers. Requires Mg(2+) as cofactor. K(+) is required as a cofactor.

It localises to the cytoplasm. The catalysed reaction is L-methionine + ATP + H2O = S-adenosyl-L-methionine + phosphate + diphosphate. Its pathway is amino-acid biosynthesis; S-adenosyl-L-methionine biosynthesis; S-adenosyl-L-methionine from L-methionine: step 1/1. Functionally, catalyzes the formation of S-adenosylmethionine (AdoMet) from methionine and ATP. The overall synthetic reaction is composed of two sequential steps, AdoMet formation and the subsequent tripolyphosphate hydrolysis which occurs prior to release of AdoMet from the enzyme. The protein is S-adenosylmethionine synthase of Lactobacillus johnsonii (strain CNCM I-12250 / La1 / NCC 533).